Consider the following 232-residue polypeptide: Ubiquinone biosynthesis O-methyltransferase (232 aa).

S-adenosyl-L-methionine contacts are provided by Arg36, Gly55, Asp76, and Leu120.

It belongs to the methyltransferase superfamily. UbiG/COQ3 family.

The enzyme catalyses a 3-demethylubiquinol + S-adenosyl-L-methionine = a ubiquinol + S-adenosyl-L-homocysteine + H(+). It carries out the reaction a 3-(all-trans-polyprenyl)benzene-1,2-diol + S-adenosyl-L-methionine = a 2-methoxy-6-(all-trans-polyprenyl)phenol + S-adenosyl-L-homocysteine + H(+). It participates in cofactor biosynthesis; ubiquinone biosynthesis. Its function is as follows. O-methyltransferase that catalyzes the 2 O-methylation steps in the ubiquinone biosynthetic pathway. The protein is Ubiquinone biosynthesis O-methyltransferase of Pseudomonas aeruginosa (strain ATCC 15692 / DSM 22644 / CIP 104116 / JCM 14847 / LMG 12228 / 1C / PRS 101 / PAO1).